A 201-amino-acid polypeptide reads, in one-letter code: FMN-dependent NADH:quinone oxidoreductase (201 aa).

FMN-binding positions include Ser-10, 16–18, and 96–99; these read SQS and MYNF.

Belongs to the azoreductase type 1 family. Homodimer. FMN serves as cofactor.

The enzyme catalyses 2 a quinone + NADH + H(+) = 2 a 1,4-benzosemiquinone + NAD(+). The catalysed reaction is N,N-dimethyl-1,4-phenylenediamine + anthranilate + 2 NAD(+) = 2-(4-dimethylaminophenyl)diazenylbenzoate + 2 NADH + 2 H(+). Quinone reductase that provides resistance to thiol-specific stress caused by electrophilic quinones. Functionally, also exhibits azoreductase activity. Catalyzes the reductive cleavage of the azo bond in aromatic azo compounds to the corresponding amines. The chain is FMN-dependent NADH:quinone oxidoreductase from Sodalis glossinidius (strain morsitans).